The sequence spans 493 residues: Xaa-Pro dipeptidase (493 aa).

Position 2 is an N-acetylalanine (A2). The residue at position 167 (S167) is a Phosphoserine. H255 serves as a coordination point for a dipeptide. The Mn(2+) site is built by D276, D287, and H370. D287 provides a ligand contact to a dipeptide. Residues H377 and R398 each coordinate a dipeptide. E412 and E452 together coordinate Mn(2+).

It belongs to the peptidase M24B family. Eukaryotic-type prolidase subfamily. Homodimer. It depends on Mn(2+) as a cofactor.

The enzyme catalyses Xaa-L-Pro dipeptide + H2O = an L-alpha-amino acid + L-proline. With respect to regulation, specifically inhibited by the pseudodipeptide CQ31. Inhibition by CQ31 indirectly activates the CARD8 inflammasome: dipeptide accumulation following PEPD inactivation weaky inhibit dipeptidyl peptidases DDP8 and DPP9, relieving DPP8- and/or DPP9-mediated inhibition of CARD8. In terms of biological role, dipeptidase that catalyzes the hydrolysis of dipeptides with a prolyl (Xaa-Pro) or hydroxyprolyl residue in the C-terminal position. The preferred dipeptide substrate is Gly-Pro, but other Xaa-Pro dipeptides, such as Ala-Pro, Met-Pro, Phe-Pro, Val-Pro and Leu-Pro, can be cleaved. Plays an important role in collagen metabolism because the high level of iminoacids in collagen. This Homo sapiens (Human) protein is Xaa-Pro dipeptidase.